A 332-amino-acid polypeptide reads, in one-letter code: MELNISESRSRSIRCIVKLGGAAITCKNELEKIHDENLEVVACQLRQAMLEGSAPSKVIGMDWSKRPGSSEISCDVDDIGDQKSSEFSKFVVVHGAGSFGHFQASRSGVHKGGLEKPIVKAGFVATRISVTNLNLEIVRALAREGIPTIGMSPFSCGWSTSKRDVASADLATVAKTIDSGFVPVLHGDAVLDNILGCTILSGDVIIRHLADHLKPEYVVFLTDVLGVYDRPPSPSEPDAVLLKEIAVGEDGSWKVVNPLLEHTDKKVDYSVAAHDTTGGMETKISEAAMIAKLGVDVYIVKAATTHSQRALNGDLRDSVPEDWLGTIIRFSK.

An N-acetylmethionine modification is found at methionine 1. An ATP-binding site is contributed by 18–22; it reads KLGGA. Alanine 96 lines the substrate pocket. Glycine 97 serves as a coordination point for ATP. 2 residues coordinate substrate: histidine 101 and glycine 202. Residues aspartate 223, 228–233, glycine 279, and lysine 283 contribute to the ATP site; that span reads YDRPPS.

Belongs to the isopentenyl phosphate kinase family.

It is found in the cytoplasm. The protein resides in the cytosol. It catalyses the reaction isopentenyl phosphate + ATP = isopentenyl diphosphate + ADP. In terms of biological role, catalyzes the formation of isopentenyl diphosphate (IPP), the universal five-carbon isoprenoid building block of all natural isoprenoids. Acts in parallel with the mevalonate (MVA) pathway and plays an important role in regulating the formation of both MVA and methylerythritol phosphate (MEP) pathway-derived terpenoid compounds by controlling the ratio of isopentenyl phosphate (IP) and dimethylallyl phosphate (DMAP) to isopentenyl diphosphate (IPP) and dimethylallyl diphosphate (DMAPP). Controls the levels of IP and DMAP that are competitive inhibitors of the farnesyl diphosphate synthase. Regulates the production of farnesyl diphosphate-derived terpenoids in the cytosol, and geranyl diphosphate-derived compounds in plastids. The sequence is that of Isopentenyl phosphate kinase from Arabidopsis thaliana (Mouse-ear cress).